Reading from the N-terminus, the 254-residue chain is Type III pantothenate kinase (254 aa).

ATP is bound at residue 6–13 (DVGNTNTT). Residues Y100 and 107–110 (GADR) contribute to the substrate site. Residue D109 is the Proton acceptor of the active site. D129 is a K(+) binding site. ATP is bound at residue T132. Substrate is bound at residue T184.

The protein belongs to the type III pantothenate kinase family. Homodimer. NH4(+) is required as a cofactor. K(+) serves as cofactor.

The protein resides in the cytoplasm. It catalyses the reaction (R)-pantothenate + ATP = (R)-4'-phosphopantothenate + ADP + H(+). It functions in the pathway cofactor biosynthesis; coenzyme A biosynthesis; CoA from (R)-pantothenate: step 1/5. Catalyzes the phosphorylation of pantothenate (Pan), the first step in CoA biosynthesis. This is Type III pantothenate kinase from Anaeromyxobacter dehalogenans (strain 2CP-C).